Consider the following 130-residue polypeptide: Ribosome-binding factor A (130 aa).

Belongs to the RbfA family. In terms of assembly, monomer. Binds 30S ribosomal subunits, but not 50S ribosomal subunits or 70S ribosomes.

The protein localises to the cytoplasm. Its function is as follows. One of several proteins that assist in the late maturation steps of the functional core of the 30S ribosomal subunit. Associates with free 30S ribosomal subunits (but not with 30S subunits that are part of 70S ribosomes or polysomes). Required for efficient processing of 16S rRNA. May interact with the 5'-terminal helix region of 16S rRNA. The protein is Ribosome-binding factor A of Prochlorococcus marinus (strain MIT 9215).